Consider the following 313-residue polypeptide: Ribosomal RNA small subunit methyltransferase H (313 aa).

S-adenosyl-L-methionine is bound by residues 35–37 (GGH), Asp-55, Phe-80, Asp-102, and Gln-109.

Belongs to the methyltransferase superfamily. RsmH family.

Its subcellular location is the cytoplasm. It catalyses the reaction cytidine(1402) in 16S rRNA + S-adenosyl-L-methionine = N(4)-methylcytidine(1402) in 16S rRNA + S-adenosyl-L-homocysteine + H(+). In terms of biological role, specifically methylates the N4 position of cytidine in position 1402 (C1402) of 16S rRNA. This Shewanella loihica (strain ATCC BAA-1088 / PV-4) protein is Ribosomal RNA small subunit methyltransferase H.